We begin with the raw amino-acid sequence, 122 residues long: Yop proteins translocation protein X (122 aa).

Residues 71–87 (HRAQDYRRELDTLQSLL) adopt a coiled-coil conformation.

In terms of assembly, interacts with YscY.

The protein localises to the secreted. Required for Yop secretion. This Yersinia enterocolitica serotype O:8 / biotype 1B (strain NCTC 13174 / 8081) protein is Yop proteins translocation protein X (yscX).